The following is a 283-amino-acid chain: Pantothenate synthetase (283 aa).

30-37 contacts ATP; that stretch reads MGNLHDGH. H37 serves as the catalytic Proton donor. Q61 lines the (R)-pantoate pocket. Q61 contacts beta-alanine. Residue 149-152 participates in ATP binding; sequence GEKD. Residue Q155 participates in (R)-pantoate binding. ATP is bound at residue 186-189; the sequence is LSSR.

Belongs to the pantothenate synthetase family. In terms of assembly, homodimer.

The protein resides in the cytoplasm. The catalysed reaction is (R)-pantoate + beta-alanine + ATP = (R)-pantothenate + AMP + diphosphate + H(+). It functions in the pathway cofactor biosynthesis; (R)-pantothenate biosynthesis; (R)-pantothenate from (R)-pantoate and beta-alanine: step 1/1. Its function is as follows. Catalyzes the condensation of pantoate with beta-alanine in an ATP-dependent reaction via a pantoyl-adenylate intermediate. The protein is Pantothenate synthetase of Escherichia coli O6:K15:H31 (strain 536 / UPEC).